Reading from the N-terminus, the 223-residue chain is MGQKVNPIGLRLGINRTWDSRWFAGRDYASLLHQDLAIKKYLKSKLAQAGVSRIVIERPAKKARITIHTARPGVVIGKKGQDIENLRKKLQVMTGNEVHLNIVEIRKPELDAQLVAENIAQQLERRVAFRRAMKRAVQSAMRLGALGIRINCGGRLGGAEIARTEWYREGRVPLHTLRADVDYGTAAAHTTYGVCGVKVWVFKGEIMEHDPMAQDKRSQDQGR.

The KH type-2 domain maps to 38 to 106 (IKKYLKSKLA…EVHLNIVEIR (69 aa)).

It belongs to the universal ribosomal protein uS3 family. Part of the 30S ribosomal subunit. Forms a tight complex with proteins S10 and S14.

Functionally, binds the lower part of the 30S subunit head. Binds mRNA in the 70S ribosome, positioning it for translation. The protein is Small ribosomal subunit protein uS3 of Rhodospirillum rubrum (strain ATCC 11170 / ATH 1.1.1 / DSM 467 / LMG 4362 / NCIMB 8255 / S1).